Consider the following 522-residue polypeptide: Protein RCC2 (522 aa).

The interval 1–83 (MPRKKAAAAA…TAGKAGGAAV (83 aa)) is disordered. Residue Ser-16 is modified to Phosphoserine. Thr-20 carries the post-translational modification Phosphothreonine. Positions 24 to 36 (GPRKRGGPAGRKR) are enriched in basic residues. Phosphoserine is present on residues Ser-43, Ser-44, Ser-45, Ser-46, Ser-50, and Ser-51. Low complexity predominate over residues 71 to 82 (RPATAGKAGGAA). An N6-acetyllysine mark is found at Lys-92 and Lys-124. RCC1 repeat units follow at residues 103 to 165 (KGQL…SLLI), 168 to 219 (EGKL…ALTE), 221 to 271 (GSVF…IMDC), 273 to 347 (GNLY…VLDS), 348 to 401 (QKRV…AVSE), 403 to 447 (GGLF…VAAD), and 448 to 501 (ESTI…VIAR). Lys-293 is modified (N6-acetyllysine). Residues 318–325 (KTKDGQIL) form a required for interaction with RAC1 region. Residue Thr-342 is modified to Phosphothreonine. Lys-377 carries the N6-acetyllysine modification. Positions 502 to 515 (DESETEKEKIKKLP) are enriched in basic and acidic residues. A disordered region spans residues 502 to 522 (DESETEKEKIKKLPEYNPRTL).

In terms of assembly, interacts with RAC1. Interacts with nucleotide-free and with GDP and GTP-bound forms of RAC1, with a slight preference for GDP-bound RAC1. Binds preferentially to the nucleotide-free form of RAC1. Interacts with CORO1C. Interacts with microtubules.

The protein localises to the nucleus. The protein resides in the nucleolus. Its subcellular location is the cytoplasm. It localises to the cytoskeleton. It is found in the chromosome. The protein localises to the centromere. The protein resides in the spindle. Its subcellular location is the midbody. It localises to the cell membrane. Functionally, multifunctional protein that may affect its functions by regulating the activity of small GTPases, such as RAC1 and RALA. Required for normal progress through the cell cycle, both during interphase and during mitosis. Required for the presence of normal levels of MAD2L1, AURKB and BIRC5 on inner centromeres during mitosis, and for normal attachment of kinetochores to mitotic spindles. Required for normal organization of the microtubule cytoskeleton in interphase cells. Functions as guanine nucleotide exchange factor (GEF) for RALA. Interferes with the activation of RAC1 by guanine nucleotide exchange factors. Prevents accumulation of active, GTP-bound RAC1, and suppresses RAC1-mediated reorganization of the actin cytoskeleton and formation of membrane protrusions. Required for normal cellular responses to contacts with the extracellular matrix of adjacent cells, and for directional cell migration in response to a fibronectin gradient (in vitro). The polypeptide is Protein RCC2 (RCC2) (Homo sapiens (Human)).